The chain runs to 224 residues: Ribosomal RNA large subunit methyltransferase E (224 aa).

Residues Gly-64, Trp-66, Asp-97, Asp-113, and Asp-138 each contribute to the S-adenosyl-L-methionine site. The active-site Proton acceptor is Lys-178.

This sequence belongs to the class I-like SAM-binding methyltransferase superfamily. RNA methyltransferase RlmE family.

The protein resides in the cytoplasm. The enzyme catalyses uridine(2552) in 23S rRNA + S-adenosyl-L-methionine = 2'-O-methyluridine(2552) in 23S rRNA + S-adenosyl-L-homocysteine + H(+). Its function is as follows. Specifically methylates the uridine in position 2552 of 23S rRNA at the 2'-O position of the ribose in the fully assembled 50S ribosomal subunit. The sequence is that of Ribosomal RNA large subunit methyltransferase E from Methylibium petroleiphilum (strain ATCC BAA-1232 / LMG 22953 / PM1).